The chain runs to 248 residues: Homeobox protein BarH-like 1 (248 aa).

A DNA-binding region (homeobox) is located at residues 135–194 (GRRSRTVFTELQLMGLEKRFEKQKYLSTPDRIDLAESLGLSQLQVKTWYQNRRMKWKKIV). Residues 197–248 (GGGLESPTKPKGRPKKNSIPTSEQLSEQERTREADRLSDGGASSLSDANQEE) are disordered. The segment covering 223 to 234 (EQERTREADRLS) has biased composition (basic and acidic residues). Positions 237-248 (GASSLSDANQEE) are enriched in polar residues.

Belongs to the BAR homeobox family.

It localises to the nucleus. Functionally, transcription factor, is involved in craniofacial development, and in stomach organogenesis. The sequence is that of Homeobox protein BarH-like 1 (barx1) from Danio rerio (Zebrafish).